Here is a 654-residue protein sequence, read N- to C-terminus: Acetyl-coenzyme A synthetase (654 aa).

CoA is bound by residues 193–196 (RRGK) and threonine 313. Residues 389-391 (GEP), 413-418 (DTWWQT), aspartate 506, and arginine 521 contribute to the ATP site. Serine 529 serves as a coordination point for CoA. Position 532 (arginine 532) interacts with ATP. 2 residues coordinate Mg(2+): histidine 545 and valine 548. The residue at position 619 (lysine 619) is an N6-acetyllysine.

Belongs to the ATP-dependent AMP-binding enzyme family. Requires Mg(2+) as cofactor. Acetylated. Deacetylation by the SIR2-homolog deacetylase activates the enzyme.

The enzyme catalyses acetate + ATP + CoA = acetyl-CoA + AMP + diphosphate. Its function is as follows. Catalyzes the conversion of acetate into acetyl-CoA (AcCoA), an essential intermediate at the junction of anabolic and catabolic pathways. AcsA undergoes a two-step reaction. In the first half reaction, AcsA combines acetate with ATP to form acetyl-adenylate (AcAMP) intermediate. In the second half reaction, it can then transfer the acetyl group from AcAMP to the sulfhydryl group of CoA, forming the product AcCoA. The chain is Acetyl-coenzyme A synthetase from Wolinella succinogenes (strain ATCC 29543 / DSM 1740 / CCUG 13145 / JCM 31913 / LMG 7466 / NCTC 11488 / FDC 602W) (Vibrio succinogenes).